Here is a 468-residue protein sequence, read N- to C-terminus: ATP synthase subunit beta (468 aa).

An ATP-binding site is contributed by 155–162; sequence GGAGVGKT.

The protein belongs to the ATPase alpha/beta chains family. F-type ATPases have 2 components, CF(1) - the catalytic core - and CF(0) - the membrane proton channel. CF(1) has five subunits: alpha(3), beta(3), gamma(1), delta(1), epsilon(1). CF(0) has three main subunits: a(1), b(2) and c(9-12). The alpha and beta chains form an alternating ring which encloses part of the gamma chain. CF(1) is attached to CF(0) by a central stalk formed by the gamma and epsilon chains, while a peripheral stalk is formed by the delta and b chains.

It is found in the cell inner membrane. It carries out the reaction ATP + H2O + 4 H(+)(in) = ADP + phosphate + 5 H(+)(out). Produces ATP from ADP in the presence of a proton gradient across the membrane. The catalytic sites are hosted primarily by the beta subunits. The chain is ATP synthase subunit beta from Leptospira biflexa serovar Patoc (strain Patoc 1 / ATCC 23582 / Paris).